Reading from the N-terminus, the 678-residue chain is DNA ligase (678 aa).

NAD(+) contacts are provided by residues 36-40 (DSEFD), 85-86 (SL), and Glu-117. Catalysis depends on Lys-119, which acts as the N6-AMP-lysine intermediate. Arg-140, Glu-177, Lys-294, and Lys-318 together coordinate NAD(+). Positions 412, 415, 430, and 436 each coordinate Zn(2+). The BRCT domain occupies 595-678 (IIDAPLLGKT…TWWQHYGNAV (84 aa)).

This sequence belongs to the NAD-dependent DNA ligase family. LigA subfamily. Mg(2+) serves as cofactor. Mn(2+) is required as a cofactor.

The catalysed reaction is NAD(+) + (deoxyribonucleotide)n-3'-hydroxyl + 5'-phospho-(deoxyribonucleotide)m = (deoxyribonucleotide)n+m + AMP + beta-nicotinamide D-nucleotide.. Functionally, DNA ligase that catalyzes the formation of phosphodiester linkages between 5'-phosphoryl and 3'-hydroxyl groups in double-stranded DNA using NAD as a coenzyme and as the energy source for the reaction. It is essential for DNA replication and repair of damaged DNA. This is DNA ligase from Dichelobacter nodosus (strain VCS1703A).